The chain runs to 890 residues: DNA mismatch repair protein MutS (890 aa).

634–641 is an ATP binding site; it reads GPNMGGKS.

Belongs to the DNA mismatch repair MutS family.

Its function is as follows. This protein is involved in the repair of mismatches in DNA. It is possible that it carries out the mismatch recognition step. This protein has a weak ATPase activity. The sequence is that of DNA mismatch repair protein MutS from Burkholderia pseudomallei (strain K96243).